The following is a 230-amino-acid chain: 3-beta-hydroxysteroid-Delta(8),Delta(7)-isomerase (230 aa).

Threonine 2 carries the N-acetylthreonine modification. 4 helical membrane passes run 29–49 (WHIL…TWLL), 66–86 (LCWF…FVLY), 121–141 (METI…IAFL), and 185–205 (FWFY…VLVL). The region spanning 61–204 (WRRLSLCWFA…LWLVLPGVLV (144 aa)) is the EXPERA domain.

This sequence belongs to the EBP family.

It is found in the endoplasmic reticulum membrane. Its subcellular location is the nucleus envelope. It localises to the cytoplasmic vesicle. The enzyme catalyses lathosterol = 5alpha-cholest-8-en-3beta-ol. It carries out the reaction zymosterol = 5alpha-cholesta-7,24-dien-3beta-ol. The catalysed reaction is 5,6alpha-epoxy-5alpha-cholestan-3beta-ol + H2O = 5alpha-cholestane-3beta,5,6beta-triol. It catalyses the reaction 5,6beta-epoxy-5beta-cholestan-3beta-ol + H2O = 5alpha-cholestane-3beta,5,6beta-triol. It participates in steroid biosynthesis; cholesterol biosynthesis. Cholestenol Delta-isomerase and cholesterol-5,6-epoxide hydrolase (ChEH) activities are inhibited by tamoxifen and the selective AEBS ligand (4-benzyl-phenoxy)-ethyl-N-pyrrolidine (PBPE). ChEH activity is inhibited by oleic acid. Functionally, isomerase that catalyzes the conversion of Delta(8)-sterols to their corresponding Delta(7)-isomers a catalytic step in the postlanosterol biosynthesis of cholesterol. Component of the microsomal antiestrogen binding site (AEBS), a multiproteic complex at the ER membrane that consists of an association between EBP and 7-dehydrocholesterol reductase/DHCR7. This complex is responsible for cholesterol-5,6-epoxide hydrolase (ChEH) activity, which consists in the hydration of cholesterol-5,6-epoxides (5,6-EC) into cholestane-3beta,5alpha,6beta-triol (CT). The precise role of each component of this complex has not been described yet. The chain is 3-beta-hydroxysteroid-Delta(8),Delta(7)-isomerase from Homo sapiens (Human).